A 264-amino-acid polypeptide reads, in one-letter code: 3-methyl-2-oxobutanoate hydroxymethyltransferase (264 aa).

2 residues coordinate Mg(2+): Asp45 and Asp84. Residues 45-46 (DS), Asp84, and Lys112 contribute to the 3-methyl-2-oxobutanoate site. Mg(2+) is bound at residue Glu114. The active-site Proton acceptor is the Glu181.

This sequence belongs to the PanB family. As to quaternary structure, homodecamer; pentamer of dimers. Requires Mg(2+) as cofactor.

It is found in the cytoplasm. It catalyses the reaction 3-methyl-2-oxobutanoate + (6R)-5,10-methylene-5,6,7,8-tetrahydrofolate + H2O = 2-dehydropantoate + (6S)-5,6,7,8-tetrahydrofolate. Its pathway is cofactor biosynthesis; (R)-pantothenate biosynthesis; (R)-pantoate from 3-methyl-2-oxobutanoate: step 1/2. Its function is as follows. Catalyzes the reversible reaction in which hydroxymethyl group from 5,10-methylenetetrahydrofolate is transferred onto alpha-ketoisovalerate to form ketopantoate. This Vibrio campbellii (strain ATCC BAA-1116) protein is 3-methyl-2-oxobutanoate hydroxymethyltransferase.